Here is a 319-residue protein sequence, read N- to C-terminus: 2-dehydropantoate 2-reductase (319 aa).

Residues 10-15 and asparagine 105 each bind NADP(+); that span reads GTGALG. Asparagine 105 serves as a coordination point for substrate. The Proton donor role is filled by lysine 192. 3 residues coordinate substrate: asparagine 196, asparagine 200, and serine 262. Glutamate 274 contacts NADP(+).

This sequence belongs to the ketopantoate reductase family.

It localises to the cytoplasm. It carries out the reaction (R)-pantoate + NADP(+) = 2-dehydropantoate + NADPH + H(+). Its pathway is cofactor biosynthesis; (R)-pantothenate biosynthesis; (R)-pantoate from 3-methyl-2-oxobutanoate: step 2/2. In terms of biological role, catalyzes the NADPH-dependent reduction of ketopantoate into pantoic acid. This is 2-dehydropantoate 2-reductase from Nostoc sp. (strain PCC 7120 / SAG 25.82 / UTEX 2576).